The primary structure comprises 769 residues: MHSNVGLAGLAGLLATASVCLSAPADQNITSDTYFYGQSPPVYPSPEGTGTGSWAAAYAKAKKFVAQLTPEEKVNLTAGTDANNGCSGNIAAIPRLNFPGLCVSDAGNGLRGTDYVSSWPSGLHVGASWNKALARQRAVQMATEFRKKGVNVLLGPVVGPLGRVAEAGRNWEGFSNDPYLSGALVYETVDGAQSVGVATCTKHYILNEQETNRNPGMEDGVEVAAVSSNIDDKTMHELYLWPFQDAVLAGSASIMCSYNRVNNSYGCQNSKTLNGLLKTELGFQGYAMTDWGAQHAGIAGANAGLDMVMPSTETWGANLTTAISNGTMDASRLDDMATRIIASWYQMNQDSDFPSPGAGMPSDMYAPHQRVIGRDASSKQTLLRGAIEGHVLVKNNHSALPLKSPQLLSVFGYDAKGPNALKQNFNWLSYSPAIQENHTLWVGGGSGANNAAYIDAPIDAIQRQAYEDGTSVLYDISSEDPEVDPTTDACLVFINSYATEGWDRPGLADNSSDTLVKNVARKCANTIVTIHNAGIRVVGEWIDHENVTAVIFAHLPGQDSGRALVELLYGRANPSGKLPYTVAKKAEDYGSLLHPSLPETPYGLFPQSDFDEGVYIDYRAFDRANITAQFEFGFGLSYTSFDYSGLQISNPKQSPQYPPSAAIQQGGNPHLWDNIVTVSAEIKNTGRVAGAEVAQLYIGIPNGPVRQLRGFEKVDVSAGETTQVQFALNRRDLSTWDVEAQQWSLQRGTYRVYVGRSSRDLPLTGSFTL.

Residues Met-1–Ser-22 form the signal peptide. 3 N-linked (GlcNAc...) asparagine glycosylation sites follow: Asn-28, Asn-75, and Asn-262. Asp-290 is an active-site residue. Residues Asn-318, Asn-325, Asn-396, Asn-437, Asn-510, Asn-546, and Asn-625 are each glycosylated (N-linked (GlcNAc...) asparagine).

Belongs to the glycosyl hydrolase 3 family.

The protein localises to the secreted. The catalysed reaction is Hydrolysis of terminal, non-reducing beta-D-glucosyl residues with release of beta-D-glucose.. It participates in glycan metabolism; cellulose degradation. Beta-glucosidases are one of a number of cellulolytic enzymes involved in the degradation of cellulosic biomass. Catalyzes the last step releasing glucose from the inhibitory cellobiose. The sequence is that of Probable beta-glucosidase M (bglM) from Aspergillus fumigatus (strain CBS 144.89 / FGSC A1163 / CEA10) (Neosartorya fumigata).